Here is a 393-residue protein sequence, read N- to C-terminus: Anhydro-N-acetylmuramic acid kinase (393 aa).

Glycine 9 to aspartate 16 serves as a coordination point for ATP.

This sequence belongs to the anhydro-N-acetylmuramic acid kinase family.

The catalysed reaction is 1,6-anhydro-N-acetyl-beta-muramate + ATP + H2O = N-acetyl-D-muramate 6-phosphate + ADP + H(+). Its pathway is amino-sugar metabolism; 1,6-anhydro-N-acetylmuramate degradation. The protein operates within cell wall biogenesis; peptidoglycan recycling. Functionally, catalyzes the specific phosphorylation of 1,6-anhydro-N-acetylmuramic acid (anhMurNAc) with the simultaneous cleavage of the 1,6-anhydro ring, generating MurNAc-6-P. Is required for the utilization of anhMurNAc either imported from the medium or derived from its own cell wall murein, and thus plays a role in cell wall recycling. The protein is Anhydro-N-acetylmuramic acid kinase of Acidithiobacillus ferrooxidans (strain ATCC 23270 / DSM 14882 / CIP 104768 / NCIMB 8455) (Ferrobacillus ferrooxidans (strain ATCC 23270)).